Consider the following 278-residue polypeptide: DegV domain-containing protein YejH (278 aa).

A DegV domain is found at 3-277 (IKIVTDSSIT…PGAWAIMIDY (275 aa)). Positions 60 and 92 each coordinate hexadecanoate.

Functionally, may bind long-chain fatty acids, such as palmitate, and may play a role in lipid transport or fatty acid metabolism. The chain is DegV domain-containing protein YejH (yejH) from Lactococcus lactis subsp. lactis (strain IL1403) (Streptococcus lactis).